We begin with the raw amino-acid sequence, 2151 residues long: Polycystin-1-like protein 3 (2151 aa).

Residues 1–20 form the signal peptide; the sequence is MLLQRRSWLWLYIRIGVILG. Over 25–1073 the chain is Extracellular; it reads RKPSIREQHG…IKLLLHVTNN (1049 aa). The C-type lectin domain maps to 34-142; that stretch reads GGNSCYQLNR…CIEKHHFICQ (109 aa). 2 disulfide bridges follow: Cys-55–Cys-141 and Cys-116–Cys-133. N-linked (GlcNAc...) asparagine glycosylation occurs at Asn-89. A compositionally biased stretch (polar residues) spans 222–245; the sequence is SLTGRPQVTSDTLASSSPPQGTSD. The disordered stretch occupies residues 222-609; sequence SLTGRPQVTS…SSSPPWPVIT (388 aa). The segment covering 246–348 has biased composition (low complexity); sequence TPASSSPPQV…ASSSPPQGTS (103 aa). Polar residues-rich tracts occupy residues 349-363 and 371-600; these read DTPA…TLDT and QGTS…TPAS. Asn-566, Asn-579, Asn-592, Asn-913, and Asn-951 each carry an N-linked (GlcNAc...) asparagine glycan. Residues 899-1061 form the GAIN-B domain; the sequence is TSLNTSTDHF…FIVPRTVDVE (163 aa). Disulfide bonds link Cys-1011–Cys-1039 and Cys-1026–Cys-1041. Residues 1011–1061 are GPS; that stretch reads CYFWDRYNRTWKSDGCQVGPKSTILKTQCLCDHLTFFSSDFFIVPRTVDVE. Positions 1045–1061 are stachel; that stretch reads TFFSSDFFIVPRTVDVE. The chain crosses the membrane as a helical span at residues 1074-1094; sequence PVGVSLLSSLLGFYILLAMWA. The Cytoplasmic segment spans residues 1095-1283; the sequence is SRKDREDMQK…NQFTRVQRLS (189 aa). Residues 1119 to 1236 form the PLAT domain; sequence SHYLIQVYTG…GNCERDRVFT (118 aa). A helical transmembrane segment spans residues 1284-1304; that stretch reads CCMALLLCDMVINIMFWKMGG. The Extracellular segment spans residues 1305-1320; that stretch reads TTAKRGTEQLGPLAVT. A helical transmembrane segment spans residues 1321 to 1341; that stretch reads LSELLVSIQTSIILFPIHLIF. Over 1342-1533 the chain is Cytoplasmic; the sequence is GRLFQLIHPP…FCLFRWLKCS (192 aa). The chain crosses the membrane as a helical span at residues 1534–1554; the sequence is CWLLLGVISLASAFFITLYSL. Residues 1555–1575 are Extracellular-facing; the sequence is ELDKDQATSWVISMMLSVLQD. The helical transmembrane segment at 1576 to 1596 threads the bilayer; sequence IFISQPIKVIFLTLLFSLMAN. At 1597–1665 the chain is on the cytoplasmic side; it reads HMPWLNKDKE…KLTGGTLVQI (69 aa). The helical transmembrane segment at 1666-1676 threads the bilayer; sequence LFLTLLMTTVY. Over 1677-1892 the chain is Extracellular; that stretch reads SAKDSSRFFL…SLTSLQSSER (216 aa). Asn-1712 and Asn-1822 each carry an N-linked (GlcNAc) asparagine glycan. The chain crosses the membrane as a helical span at residues 1893–1921; sequence GFAWIVSQVVYYLLVCYYAFIQGCRLKRQ. Residues 1922–1930 lie on the Cytoplasmic side of the membrane; sequence RLAFFTRKR. Residues 1931–1949 form a helical membrane-spanning segment; that stretch reads NLLDTSIVLISFSILGLSM. The Extracellular portion of the chain corresponds to 1950-1980; it reads QSLSLLHKKMQQYHCDRDRFISFYEALRVNS. Residues 1981–2002 form a helical membrane-spanning segment; that stretch reads AVTHLRGFLLLFATVRVWDLLR. Residues 2003–2019 are Cytoplasmic-facing; sequence HHAQLQVINKTLSKAWD. The helical transmembrane segment at 2020-2044 threads the bilayer; sequence EVLGFILIIVVLLSSYAMTFNLLFG. Residues 2043–2081 form a channel pore-region region; the sequence is FGWSISDYQSFFRSIVTVVGLLMGTSKHKEVIALYPILG. The Extracellular segment spans residues 2045 to 2077; the sequence is WSISDYQSFFRSIVTVVGLLMGTSKHKEVIALY. A helical transmembrane segment spans residues 2078–2097; that stretch reads PILGSLLVLSSIILMGLVII. The Cytoplasmic portion of the chain corresponds to 2098–2151; the sequence is NLFVSAILIAFGKERKACEKEATLTDMLLQKLSSLLGIRLHQNPSEEHADNTGY.

This sequence belongs to the polycystin family. Heterotetramer with PKD2L1, composed of 3 subunit of PKD2L1 and 1 subunit of PKD1L3. Post-translationally, autoproteolytically processed at the GPS region of the GAIN-B domain; this cleavage modulates receptor activity. In terms of tissue distribution, expressed in a subset of taste receptor cells (type III taste cells) distinct from those involved in bitter, sweet and umami taste. Expressed in circumvallate and foliate taste buds, but not in surrounding non-gustatory lingual epithelium cells. Expressed in testis.

It localises to the cell membrane. It catalyses the reaction Ca(2+)(in) = Ca(2+)(out). It carries out the reaction Na(+)(in) = Na(+)(out). The catalysed reaction is K(+)(in) = K(+)(out). The enzyme catalyses Mg(2+)(in) = Mg(2+)(out). With respect to regulation, the non-selective cation channel is gated following an off-response property by acid: gated open after the removal of acid stimulus, but not during acid application. Non-selective cation channel activity is inhibited by capsaicin. Regulation of non-selective cation channel activity by external Ca(2+) is bimodal, first sensitizing and subsequently inactivating the current. The apo (closed) heterotetramer has an asymmetric selectivity filter (SF) guarded by Lys-2069 in absence of Ca(2+). However, Ca(2+)-entrance to the SF vestibule is accompanied by a swing motion of Lys-2069 on PKD1L3. Pore-forming subunit of a heterotetrameric, non-selective cation channel that is permeable to Ca(2+). Also shows permeability towards NA(1+), K(+) and Mg(2+). Heterotetrameric complex channel is activated by external low pH and Ca(2+), but opens only when the extracellular pH rises again and after the removal of acid stimulus. May act as a sour taste receptor in gustatory cells; however, its contribution to sour taste perception is unclear in vivo and may be indirect. This chain is Polycystin-1-like protein 3, found in Mus musculus (Mouse).